The chain runs to 324 residues: Phosphate transport system permease protein PstC (324 aa).

6 consecutive transmembrane segments (helical) span residues 29–49, 87–107, 126–146, 173–193, 235–255, and 291–311; these read LLLT…ALSM, IVTA…IAFF, LLAG…LVPV, PLGI…IPFI, VIGG…AVAF, and SALL…LVIA. Residues 83-311 enclose the ABC transmembrane type-1 domain; it reads IYGTIVTALI…IVTFAVLVIA (229 aa).

It belongs to the binding-protein-dependent transport system permease family. CysTW subfamily.

Its subcellular location is the cell inner membrane. In terms of biological role, part of a binding-protein-dependent transport system for phosphate; probably responsible for the translocation of the substrate across the membrane. The polypeptide is Phosphate transport system permease protein PstC (pstC) (Xylella fastidiosa (strain Temecula1 / ATCC 700964)).